The primary structure comprises 342 residues: Phosphate acyltransferase (342 aa).

The protein belongs to the PlsX family. As to quaternary structure, homodimer. Probably interacts with PlsY.

It localises to the cytoplasm. It carries out the reaction a fatty acyl-[ACP] + phosphate = an acyl phosphate + holo-[ACP]. Its pathway is lipid metabolism; phospholipid metabolism. In terms of biological role, catalyzes the reversible formation of acyl-phosphate (acyl-PO(4)) from acyl-[acyl-carrier-protein] (acyl-ACP). This enzyme utilizes acyl-ACP as fatty acyl donor, but not acyl-CoA. The chain is Phosphate acyltransferase from Legionella pneumophila (strain Corby).